The primary structure comprises 831 residues: Myosin-A (831 aa).

Positions 99-773 (MTYGDIGMLP…GAKELTQIQR (675 aa)) constitute a Myosin motor domain. 193–200 (GESGAGKT) is an ATP binding site. The segment at 663–673 (PHFIRCIKPND) is actin-binding. Residues 775 to 831 (CLSSWEPLVSVLEAYYAGRRHKKQLLKKTPFIIRAQAHIRRHLVDNNVSPATVQPAF) are tail.

This sequence belongs to the TRAFAC class myosin-kinesin ATPase superfamily. Myosin family.

It is found in the cell membrane. Myosins are actin-based motor molecules with ATPase activity. Unconventional myosins serve in intracellular movements. Their highly divergent tails are presumed to bind to membranous compartments, which would be moved relative to actin filaments. The sequence is that of Myosin-A from Toxoplasma gondii.